A 447-amino-acid chain; its full sequence is Protein cortex (447 aa).

WD repeat units lie at residues Thr-108–Gly-148, Phe-149–Ser-188, Asn-198–Arg-237, Asp-281–Thr-325, Gly-344–Gly-380, and Ser-384–Lys-423. A D-box motif is present at residues Ser-384–Ser-395.

It belongs to the WD repeat CORT family.

The protein localises to the cytoplasm. Controls wing pigmentation patterning by regulating scale cell development, thereby playing a key role in mimicry and crypsis. Probably acts as an activator of the anaphase promoting complex/cyclosome (APC/C) that promotes the ubiquitin ligase activity and substrate specificity of the APC/C. The protein is Protein cortex of Heliconius melpomene (Postman butterfly).